The primary structure comprises 122 residues: Holo-[acyl-carrier-protein] synthase (122 aa).

Residues D8 and E52 each coordinate Mg(2+).

It belongs to the P-Pant transferase superfamily. AcpS family. Mg(2+) is required as a cofactor.

It is found in the cytoplasm. The catalysed reaction is apo-[ACP] + CoA = holo-[ACP] + adenosine 3',5'-bisphosphate + H(+). In terms of biological role, transfers the 4'-phosphopantetheine moiety from coenzyme A to a Ser of acyl-carrier-protein. This is Holo-[acyl-carrier-protein] synthase from Lachnoclostridium phytofermentans (strain ATCC 700394 / DSM 18823 / ISDg) (Clostridium phytofermentans).